Reading from the N-terminus, the 344-residue chain is MGNLFSRTKSPATELERVVLSIEDFKKRLQTISASNSSTLYYYYMGVIIILSIAMAHTWLRFDDPTKTYVACALVFGATVIVLTGRYIINCFFAWRTNRTTQKLENAITQKTVLLDLVKETLKFKEAKEILDRYEEKTEAGNTPTENSKLIHQQKQQNETLVSKTIMKPDQKRVETPVSQKPVPSKPGIAFDSMNMTPYQQRNSNATPVRPFLRQSTALDRILDYFMSDGPNCRNALICSICHTHNGMSVPAEYPFISFRCFECGHLNAAKKMGPHLPITRPPMGPKGIQHNGRAGPVPPKNQQPVVPMENPNPSTDLTPSASQHGSDSEPEKNADETAVVEKS.

The Cytoplasmic segment spans residues 1–39; the sequence is MGNLFSRTKSPATELERVVLSIEDFKKRLQTISASNSST. A helical transmembrane segment spans residues 40 to 60; the sequence is LYYYYMGVIIILSIAMAHTWL. Residues 61 to 68 lie on the Lumenal side of the membrane; sequence RFDDPTKT. Residues 69 to 89 traverse the membrane as a helical segment; that stretch reads YVACALVFGATVIVLTGRYII. Topologically, residues 90–344 are cytoplasmic; it reads NCFFAWRTNR…ADETAVVEKS (255 aa). Residues 116–140 adopt a coiled-coil conformation; it reads DLVKETLKFKEAKEILDRYEEKTEA. Disordered stretches follow at residues 136 to 155 and 171 to 192; these read EKTE…HQQK and QKRV…IAFD. The segment covering 140-155 has biased composition (polar residues); sequence AGNTPTENSKLIHQQK. A C4-type; plays a role in ER morphology zinc finger spans residues 239–264; it reads CSICHTHNGMSVPAEYPFISFRCFEC. The segment at 275-344 is disordered; sequence PHLPITRPPM…ADETAVVEKS (70 aa). Over residues 312–326 the composition is skewed to polar residues; the sequence is PNPSTDLTPSASQHG. Basic and acidic residues predominate over residues 327–344; the sequence is SDSEPEKNADETAVVEKS.

The protein belongs to the lunapark family.

It localises to the endoplasmic reticulum membrane. Functionally, plays a role in tubular endoplasmic reticulum network formation and maintenance. May be involved in central nervous system development. Has a presynaptic role in neurotransmission. Likely to operate in synaptogenesis by regulating vesicular transport or localization. Required for correct localization of rab-3 and snb-1. This is Endoplasmic reticulum junction formation protein lunapark-1 from Caenorhabditis briggsae.